A 1180-amino-acid polypeptide reads, in one-letter code: DNA-directed RNA polymerase subunit beta (1180 aa).

Belongs to the RNA polymerase beta chain family. In terms of assembly, the RNAP catalytic core consists of 2 alpha, 1 beta, 1 beta' and 1 omega subunit. When a sigma factor is associated with the core the holoenzyme is formed, which can initiate transcription.

It carries out the reaction RNA(n) + a ribonucleoside 5'-triphosphate = RNA(n+1) + diphosphate. Functionally, DNA-dependent RNA polymerase catalyzes the transcription of DNA into RNA using the four ribonucleoside triphosphates as substrates. This Macrococcus caseolyticus (strain JCSC5402) (Macrococcoides caseolyticum) protein is DNA-directed RNA polymerase subunit beta.